Here is a 77-residue protein sequence, read N- to C-terminus: Exodeoxyribonuclease 7 small subunit (77 aa).

This sequence belongs to the XseB family. In terms of assembly, heterooligomer composed of large and small subunits.

The protein resides in the cytoplasm. The enzyme catalyses Exonucleolytic cleavage in either 5'- to 3'- or 3'- to 5'-direction to yield nucleoside 5'-phosphates.. Its function is as follows. Bidirectionally degrades single-stranded DNA into large acid-insoluble oligonucleotides, which are then degraded further into small acid-soluble oligonucleotides. The chain is Exodeoxyribonuclease 7 small subunit from Chromobacterium violaceum (strain ATCC 12472 / DSM 30191 / JCM 1249 / CCUG 213 / NBRC 12614 / NCIMB 9131 / NCTC 9757 / MK).